The chain runs to 82 residues: MMSALFCDATHELDAIGLRCPEPVMMVRKKVRLMADGETLLVSADDPSTTRDIPSFCRFMDHTLVASETEQAPYRYLIRKGQ.

The Cysteine persulfide intermediate role is filled by C20.

Belongs to the sulfur carrier protein TusA family.

The protein localises to the cytoplasm. Functionally, sulfur carrier protein which probably makes part of a sulfur-relay system. The polypeptide is Sulfur carrier protein TusA (Aeromonas hydrophila subsp. hydrophila (strain ATCC 7966 / DSM 30187 / BCRC 13018 / CCUG 14551 / JCM 1027 / KCTC 2358 / NCIMB 9240 / NCTC 8049)).